Here is a 591-residue protein sequence, read N- to C-terminus: Formate--tetrahydrofolate ligase (591 aa).

ATP is bound at residue 74–81 (TPLGEGKS).

This sequence belongs to the formate--tetrahydrofolate ligase family.

The enzyme catalyses (6S)-5,6,7,8-tetrahydrofolate + formate + ATP = (6R)-10-formyltetrahydrofolate + ADP + phosphate. It participates in one-carbon metabolism; tetrahydrofolate interconversion. The protein is Formate--tetrahydrofolate ligase of Lawsonia intracellularis (strain PHE/MN1-00).